Reading from the N-terminus, the 95-residue chain is MSDSLWHLYLLRTASGMLYTGITTDVARRLAQHQAGKGAKALRGKGELTLVFHCEAGDRSTALKLEYRVKQLSKQQKEKLVIDQPRLLTTLFLDS.

A GIY-YIG domain is found at 4–79 (SLWHLYLLRT…KQLSKQQKEK (76 aa)).

It belongs to the UPF0213 family.

The sequence is that of UPF0213 protein YPA_2977 from Yersinia pestis bv. Antiqua (strain Antiqua).